Reading from the N-terminus, the 287-residue chain is Oxaloacetate decarboxylase (287 aa).

Position 50 (Ser50) interacts with substrate. Position 88 (Asp88) interacts with Mg(2+). Substrate-binding residues include Arg159 and His235.

This sequence belongs to the isocitrate lyase/PEP mutase superfamily. Oxaloacetate decarboxylase family. As to quaternary structure, homotetramer; dimer of dimers. Requires Mg(2+) as cofactor.

The enzyme catalyses oxaloacetate + H(+) = pyruvate + CO2. In terms of biological role, catalyzes the decarboxylation of oxaloacetate into pyruvate. Seems to play a role in maintaining cellular concentrations of bicarbonate and pyruvate. The chain is Oxaloacetate decarboxylase from Marinomonas sp. (strain MWYL1).